The chain runs to 269 residues: Integral membrane protein 2C (269 aa).

At T39 the chain carries Phosphothreonine. The helical; Signal-anchor for type II membrane protein transmembrane segment at 57–77 (VGGVCYLSMGMVVLLMGLVFA) threads the bilayer. A BRICHOS domain is found at 138–232 (FGGGDPADII…LCNGKDTYRL (95 aa)). A disulfide bridge connects residues C165 and C224. The N-linked (GlcNAc...) asparagine glycan is linked to N171.

It belongs to the ITM2 family. Interacts with BACE1. Interacts with APP. Interacts with STMN2. Type I membrane-bound, as well as soluble, furin has a pre-eminent role in ITM2C proteolytic processing. PCSK7 and PCSK5 may also be involved although to a lesser extent. The soluble form of PCSK7 is incapable of processing ITM2C. Fails to undergo shedding by ADAM10 and intramembrane cleavage by SPPL2B.

The protein resides in the lysosome membrane. The protein localises to the cell membrane. Its function is as follows. Negative regulator of amyloid-beta peptide production. May inhibit the processing of APP by blocking its access to alpha- and beta-secretase. Binding to the beta-secretase-cleaved APP C-terminal fragment is negligible, suggesting that ITM2C is a poor gamma-secretase cleavage inhibitor. May play a role in TNF-induced cell death and neuronal differentiation. The chain is Integral membrane protein 2C (Itm2c) from Rattus norvegicus (Rat).